A 178-amino-acid polypeptide reads, in one-letter code: Neuroblastoma suppressor of tumorigenicity 1 (178 aa).

Positions 1–16 (MLWVLVGAVLPVMLLA) are cleaved as a signal peptide. 5 disulfides stabilise this stretch: Cys34–Cys84, Cys48–Cys98, Cys58–Cys117, Cys62–Cys119, and Cys81–Cys122. The region spanning 34–123 (CEAKNITQIV…IVHCSCQACG (90 aa)) is the CTCK domain. A disordered region spans residues 132–178 (NVYVQGEDSPGSQPGPHSHAHPHPGGQTPEPEEPPGAPQVEEEGAED). Low complexity predominate over residues 140–160 (SPGSQPGPHSHAHPHPGGQTP).

Belongs to the DAN family. As to quaternary structure, homodimer.

The protein localises to the secreted. Functionally, possible candidate as a tumor suppressor gene of neuroblastoma. May play an important role in preventing cells from entering the final stage (G1/S) of the transformation process. This Mus musculus (Mouse) protein is Neuroblastoma suppressor of tumorigenicity 1 (Nbl1).